The chain runs to 467 residues: Plasma alpha-L-fucosidase (467 aa).

Positions 1-28 are cleaved as a signal peptide; sequence MRPQELPRLAFPLLLLLLLLLPPPPCPA. N-linked (GlcNAc...) asparagine glycans are attached at residues Asn-171 and Asn-239. Ser-301 bears the Phosphoserine; by FAM20C mark. Asn-377 carries N-linked (GlcNAc...) asparagine glycosylation.

This sequence belongs to the glycosyl hydrolase 29 family. Homotetramer.

Its subcellular location is the secreted. The enzyme catalyses an alpha-L-fucoside + H2O = L-fucose + an alcohol. Functionally, alpha-L-fucosidase is responsible for hydrolyzing the alpha-1,6-linked fucose joined to the reducing-end N-acetylglucosamine of the carbohydrate moieties of glycoproteins. This Homo sapiens (Human) protein is Plasma alpha-L-fucosidase (FUCA2).